The following is an 879-amino-acid chain: Valine--tRNA ligase (879 aa).

Positions 43 to 53 (PNVTGVLHMGH) match the 'HIGH' region motif. The 'KMSKS' region signature appears at 534–538 (KMSKS). Residue K537 participates in ATP binding. Residues 807 to 878 (LGNMIDVEAE…LKESIAALKK (72 aa)) adopt a coiled-coil conformation.

Belongs to the class-I aminoacyl-tRNA synthetase family. ValS type 1 subfamily. In terms of assembly, monomer.

The protein resides in the cytoplasm. It catalyses the reaction tRNA(Val) + L-valine + ATP = L-valyl-tRNA(Val) + AMP + diphosphate. Functionally, catalyzes the attachment of valine to tRNA(Val). As ValRS can inadvertently accommodate and process structurally similar amino acids such as threonine, to avoid such errors, it has a 'posttransfer' editing activity that hydrolyzes mischarged Thr-tRNA(Val) in a tRNA-dependent manner. The chain is Valine--tRNA ligase from Bacteroides thetaiotaomicron (strain ATCC 29148 / DSM 2079 / JCM 5827 / CCUG 10774 / NCTC 10582 / VPI-5482 / E50).